The following is an 84-amino-acid chain: Small ribosomal subunit protein uS17 (84 aa).

It belongs to the universal ribosomal protein uS17 family. Part of the 30S ribosomal subunit.

Its function is as follows. One of the primary rRNA binding proteins, it binds specifically to the 5'-end of 16S ribosomal RNA. This Clostridium botulinum (strain Alaska E43 / Type E3) protein is Small ribosomal subunit protein uS17.